The chain runs to 347 residues: Quinolinate synthase (347 aa).

The iminosuccinate site is built by His-47 and Ser-68. Cys-113 provides a ligand contact to [4Fe-4S] cluster. Iminosuccinate is bound by residues 139-141 (YAN) and Ser-156. Cys-200 provides a ligand contact to [4Fe-4S] cluster. Residues 226-228 (HPE) and Thr-243 contribute to the iminosuccinate site. Cys-297 is a binding site for [4Fe-4S] cluster.

This sequence belongs to the quinolinate synthase family. Type 1 subfamily. It depends on [4Fe-4S] cluster as a cofactor.

It localises to the cytoplasm. It catalyses the reaction iminosuccinate + dihydroxyacetone phosphate = quinolinate + phosphate + 2 H2O + H(+). It functions in the pathway cofactor biosynthesis; NAD(+) biosynthesis; quinolinate from iminoaspartate: step 1/1. Catalyzes the condensation of iminoaspartate with dihydroxyacetone phosphate to form quinolinate. The sequence is that of Quinolinate synthase from Salmonella paratyphi A (strain ATCC 9150 / SARB42).